A 436-amino-acid chain; its full sequence is GTPase Der (436 aa).

EngA-type G domains are found at residues 4–167 (PIVA…NKES) and 176–351 (IRLS…ENHK). Residues 10–17 (GKPNVGKS), 57–61 (DTGGI), 119–122 (NKVD), 182–189 (GRPNVGKS), 229–233 (DTAGM), and 294–297 (NKWD) each bind GTP. The region spanning 352-436 (KRVQSSTLNE…PIHIIPRKRN (85 aa)) is the KH-like domain.

It belongs to the TRAFAC class TrmE-Era-EngA-EngB-Septin-like GTPase superfamily. EngA (Der) GTPase family. Associates with the 50S ribosomal subunit.

Its function is as follows. GTPase that plays an essential role in the late steps of ribosome biogenesis. The polypeptide is GTPase Der (Staphylococcus epidermidis (strain ATCC 35984 / DSM 28319 / BCRC 17069 / CCUG 31568 / BM 3577 / RP62A)).